The following is a 529-amino-acid chain: Serine hydroxymethyltransferase 3, chloroplastic (529 aa).

A chloroplast-targeting transit peptide spans 1–60; sequence MQACCGGNSMASLQQPGRVQGSVFPPIMPPVTKFSQQLKFNISKPFRSSFLKRNLVSEMR. An N6-(pyridoxal phosphate)lysine modification is found at Lys-314.

This sequence belongs to the SHMT family. Homotetramer. Requires pyridoxal 5'-phosphate as cofactor.

It localises to the plastid. The protein localises to the chloroplast. It catalyses the reaction (6R)-5,10-methylene-5,6,7,8-tetrahydrofolate + glycine + H2O = (6S)-5,6,7,8-tetrahydrofolate + L-serine. It functions in the pathway one-carbon metabolism; tetrahydrofolate interconversion. Its activity is regulated as follows. Inhibited by 5-CH3-H4PteGlu1/5 and 5-HCO-H4PteGlu1/5 in vitro. Catalyzes the interconversion of serine and glycine and directs the hydroxymethyl moiety of serine into the metabolic network of H4PteGlu(n)-bound one-carbon units. The protein is Serine hydroxymethyltransferase 3, chloroplastic of Arabidopsis thaliana (Mouse-ear cress).